Here is a 119-residue protein sequence, read N- to C-terminus: Protein TusC (119 aa).

Belongs to the DsrF/TusC family. In terms of assembly, heterohexamer, formed by a dimer of trimers. The hexameric TusBCD complex contains 2 copies each of TusB, TusC and TusD. The TusBCD complex interacts with TusE.

The protein localises to the cytoplasm. Part of a sulfur-relay system required for 2-thiolation of 5-methylaminomethyl-2-thiouridine (mnm(5)s(2)U) at tRNA wobble positions. This chain is Protein TusC, found in Sodalis glossinidius (strain morsitans).